Consider the following 335-residue polypeptide: Nucleoid-associated protein YejK (335 aa).

Belongs to the YejK family.

The protein localises to the cytoplasm. The protein resides in the nucleoid. The chain is Nucleoid-associated protein YejK from Salmonella enteritidis PT4 (strain P125109).